Here is a 21-residue protein sequence, read N- to C-terminus: 23S rRNA methylase leader peptide (21 aa).

Functionally, involved in erythromycin resistance. The sequence is that of 23S rRNA methylase leader peptide from Corynebacterium diphtheriae.